The following is a 527-amino-acid chain: 2-isopropylmalate synthase (527 aa).

Residues Ile-18–Val-280 form the Pyruvate carboxyltransferase domain. Positions 27, 215, 217, and 251 each coordinate Mn(2+). Residues Thr-405–Pro-527 are regulatory domain.

It belongs to the alpha-IPM synthase/homocitrate synthase family. LeuA type 1 subfamily. As to quaternary structure, homodimer. Mn(2+) serves as cofactor.

The protein localises to the cytoplasm. The enzyme catalyses 3-methyl-2-oxobutanoate + acetyl-CoA + H2O = (2S)-2-isopropylmalate + CoA + H(+). Its pathway is amino-acid biosynthesis; L-leucine biosynthesis; L-leucine from 3-methyl-2-oxobutanoate: step 1/4. In terms of biological role, catalyzes the condensation of the acetyl group of acetyl-CoA with 3-methyl-2-oxobutanoate (2-ketoisovalerate) to form 3-carboxy-3-hydroxy-4-methylpentanoate (2-isopropylmalate). This chain is 2-isopropylmalate synthase, found in Rhodopirellula baltica (strain DSM 10527 / NCIMB 13988 / SH1).